A 1058-amino-acid chain; its full sequence is MSSSVLSKKRKVSGPDSSLDSSWSPTYSVMFGVPPGPTNEMSKNKEMDIDESLYSRQLYVLGHEAMKHLQASSVLISGLQGLGVEIAKNIILGGVKAVTLHDQGIAQWADLSSQFCLREEDIGKNRAEISQPRLAELNSYVPVFAYTGPLIEEFLSGFQVVVLTNTPLEYQLQVGEFCHSHGIKLVVADTRGLVGQLFCDFGEEMILTDSNGEQPLSAMVSMITKENPGIVTCLEDSRHGFESGDFISFTEVQGMSELNGIGPIEIKVLGPYTFSICDTSSFSEYIRGGIVSQVKVPRKINFKPLLASLAEPEFVVTDFAKCCHPAQLHIGFQALHQFCTQHSRPPRPHNEEDAEELVTLAQSVNAQALPAVQQDCLDIDLIRKLAYVAAGDLAPMNAFFGGLAAQEVMKACSGKFMPIRQWLYFDALECLPEHRVAFMEDKCLPHQNRYDGQVAVFGSDLQEKLGKQKYFLVGAGAIGCELLKNFAMIGLGCGEDGEITVTDMDTIEKSNLNRQFLFRPWDITKLKSETAAAAVRDINPHIRIFSHQNRVGPETEHVYDDDFFQKLDGVANALDNVDARLYVDRRCVYYRKPLLESGTLGTKGNVQVVVPFLTESYSSSQDPPEKSIPICTLKNFPNAIEHTVQWARDEFEGLFKQSAENVNQYLTDPKFMERTLQLAGTQPLEVLEAIHCSLVLQRPQTWADCVTWAYQHWHTQYSHNIQQLLHNFPPAQLTSSGALFWSGPKRCPHPLTFDINNPLHLDYVMAAANLFAQTYGLGGSQDCAVVAKLLQSLPVPKFAPKSGIRIHVSEQELQSTSATTIDDSHLEELKTALPTPDKLLGFKMYPIDFEKDDDSNFHMDFIVAASNLRAENYGISPADRHKSKLIAGKIIPAIATTTSAIVGLVCLELYKVVQGHQQLESYKNSFINLALPLFSFSAPLAPECHQYYDQEWTLWDRFDVQGLQPSGEEMTLKQFLDYFKTEHKLEVIMLSQGVSMLYSVFMPASKLKERLDQPMTEIVSCVSKQKLGHHVKSLVFELCCNSDSGDDIEVPYVRYIIR.

The disordered stretch occupies residues 1-22; it reads MSSSVLSKKRKVSGPDSSLDSS. ATP contacts are provided by residues Ala477, Asp503, Arg514, Lys527, and 575–576; that span reads DN. The active-site Glycyl thioester intermediate is the Cys631.

Belongs to the ubiquitin-activating E1 family. As to quaternary structure, monomer. As to expression, expressed in testis in A spermatogonia and spermatids but not (or at very low levels) in pachytene spermatocytes. Also expressed in Y-bearing ovaries and at very low levels in adrenal gland.

The enzyme catalyses ATP + ubiquitin + [E1 ubiquitin-activating enzyme]-L-cysteine = AMP + diphosphate + S-ubiquitinyl-[E1 ubiquitin-activating enzyme]-L-cysteine.. It participates in protein modification; protein ubiquitination. Activates ubiquitin by first adenylating its C-terminal glycine residue with ATP, and thereafter linking this residue to the side chain of a cysteine residue in E1, yielding a ubiquitin-E1 thioester and free AMP. The Y chromosome form could be involved in the survival and proliferation of differentiating spermatogonia. This Mus musculus (Mouse) protein is Ubiquitin-like modifier-activating enzyme 1 Y (Uba1y).